The chain runs to 131 residues: Small ribosomal subunit protein uS12 (131 aa).

A 3-methylthioaspartic acid modification is found at Asp89.

This sequence belongs to the universal ribosomal protein uS12 family. In terms of assembly, part of the 30S ribosomal subunit. Contacts proteins S8 and S17. May interact with IF1 in the 30S initiation complex.

Its function is as follows. With S4 and S5 plays an important role in translational accuracy. Functionally, interacts with and stabilizes bases of the 16S rRNA that are involved in tRNA selection in the A site and with the mRNA backbone. Located at the interface of the 30S and 50S subunits, it traverses the body of the 30S subunit contacting proteins on the other side and probably holding the rRNA structure together. The combined cluster of proteins S8, S12 and S17 appears to hold together the shoulder and platform of the 30S subunit. The chain is Small ribosomal subunit protein uS12 from Campylobacter concisus (strain 13826).